A 98-amino-acid chain; its full sequence is Large ribosomal subunit protein uL23 (98 aa).

Belongs to the universal ribosomal protein uL23 family. In terms of assembly, part of the 50S ribosomal subunit. Contacts protein L29, and trigger factor when it is bound to the ribosome.

Its function is as follows. One of the early assembly proteins it binds 23S rRNA. One of the proteins that surrounds the polypeptide exit tunnel on the outside of the ribosome. Forms the main docking site for trigger factor binding to the ribosome. This is Large ribosomal subunit protein uL23 from Bordetella bronchiseptica (strain ATCC BAA-588 / NCTC 13252 / RB50) (Alcaligenes bronchisepticus).